A 294-amino-acid chain; its full sequence is ATP synthase gamma chain (294 aa).

It belongs to the ATPase gamma chain family. F-type ATPases have 2 components, CF(1) - the catalytic core - and CF(0) - the membrane proton channel. CF(1) has five subunits: alpha(3), beta(3), gamma(1), delta(1), epsilon(1). CF(0) has three main subunits: a, b and c.

The protein localises to the cell inner membrane. Produces ATP from ADP in the presence of a proton gradient across the membrane. The gamma chain is believed to be important in regulating ATPase activity and the flow of protons through the CF(0) complex. The chain is ATP synthase gamma chain from Nitratiruptor sp. (strain SB155-2).